Consider the following 100-residue polypeptide: MGDLLSDEARRAALVELPGWREADGGKAFTRTFTFRNFNEAFGFMTRAALVAEKNDHHPDWRNVYKTVEVNLSTHDAGGITARDVALAKKMNEIAARFGI.

It belongs to the pterin-4-alpha-carbinolamine dehydratase family.

The catalysed reaction is (4aS,6R)-4a-hydroxy-L-erythro-5,6,7,8-tetrahydrobiopterin = (6R)-L-erythro-6,7-dihydrobiopterin + H2O. The sequence is that of Putative pterin-4-alpha-carbinolamine dehydratase from Afipia carboxidovorans (strain ATCC 49405 / DSM 1227 / KCTC 32145 / OM5) (Oligotropha carboxidovorans).